The sequence spans 221 residues: 7-cyano-7-deazaguanine synthase (221 aa).

8–18 contacts ATP; that stretch reads LSGGMDSAAVI. The Zn(2+) site is built by cysteine 186, cysteine 196, cysteine 199, and cysteine 202.

This sequence belongs to the QueC family. It depends on Zn(2+) as a cofactor.

The catalysed reaction is 7-carboxy-7-deazaguanine + NH4(+) + ATP = 7-cyano-7-deazaguanine + ADP + phosphate + H2O + H(+). Its pathway is purine metabolism; 7-cyano-7-deazaguanine biosynthesis. Its function is as follows. Catalyzes the ATP-dependent conversion of 7-carboxy-7-deazaguanine (CDG) to 7-cyano-7-deazaguanine (preQ(0)). The protein is 7-cyano-7-deazaguanine synthase of Stenotrophomonas maltophilia (strain R551-3).